The sequence spans 171 residues: Myosin regulatory light chain 12A (171 aa).

Threonine 18 is subject to Phosphothreonine; by MLCK. Serine 19 is subject to Phosphoserine; by MLCK. EF-hand domains follow at residues 28 to 63, 97 to 132, and 133 to 168; these read SQIQEFKEAFNMIDQNRDGFIDKEDLHDMLASLGKN, DPEDVIRNAFACFDEEATGTIQEDYLRELLTTMGDR, and FTDEEVDELYREAPIDKKGNFNYIEFTRILKHGAKD. Ca(2+)-binding residues include aspartate 41, asparagine 43, aspartate 45, and aspartate 52.

Myosin is a hexamer of 2 heavy chains and 4 light chains. Phosphorylation increases the actin-activated myosin ATPase activity and thereby regulates the contractile activity. It is required to generate the driving force in the migration of the cells but not necessary for localization of myosin-2 at the leading edge.

Myosin regulatory subunit that plays an important role in regulation of both smooth muscle and nonmuscle cell contractile activity via its phosphorylation. Implicated in cytokinesis, receptor capping, and cell locomotion. The sequence is that of Myosin regulatory light chain 12A (MYL12A) from Homo sapiens (Human).